The sequence spans 135 residues: Holo-[acyl-carrier-protein] synthase (135 aa).

Residues Asp8 and Glu58 each coordinate Mg(2+).

It belongs to the P-Pant transferase superfamily. AcpS family. Mg(2+) is required as a cofactor.

It localises to the cytoplasm. The enzyme catalyses apo-[ACP] + CoA = holo-[ACP] + adenosine 3',5'-bisphosphate + H(+). Transfers the 4'-phosphopantetheine moiety from coenzyme A to a Ser of acyl-carrier-protein. The protein is Holo-[acyl-carrier-protein] synthase of Leuconostoc citreum (strain KM20).